A 645-amino-acid chain; its full sequence is Mediator of RNA polymerase II transcription subunit 17 (645 aa).

It belongs to the Mediator complex subunit 17 family. Component of the Mediator complex.

The protein localises to the nucleus. Functionally, component of the Mediator complex, a coactivator involved in the regulated transcription of nearly all RNA polymerase II-dependent genes. Mediator functions as a bridge to convey information from gene-specific regulatory proteins to the basal RNA polymerase II transcription machinery. Mediator is recruited to promoters by direct interactions with regulatory proteins and serves as a scaffold for the assembly of a functional preinitiation complex with RNA polymerase II and the general transcription factors. This Aedes aegypti (Yellowfever mosquito) protein is Mediator of RNA polymerase II transcription subunit 17 (MED17).